Consider the following 785-residue polypeptide: Endonuclease MutS2 (785 aa).

An ATP-binding site is contributed by 332–339; the sequence is GPNTGGKT. In terms of domain architecture, Smr spans 710–785; it reads IDLRGLDAEE…GDGATIVELK (76 aa).

Belongs to the DNA mismatch repair MutS family. MutS2 subfamily. In terms of assembly, homodimer. Binds to stalled ribosomes, contacting rRNA.

Its function is as follows. Endonuclease that is involved in the suppression of homologous recombination and thus may have a key role in the control of bacterial genetic diversity. Acts as a ribosome collision sensor, splitting the ribosome into its 2 subunits. Detects stalled/collided 70S ribosomes which it binds and splits by an ATP-hydrolysis driven conformational change. Acts upstream of the ribosome quality control system (RQC), a ribosome-associated complex that mediates the extraction of incompletely synthesized nascent chains from stalled ribosomes and their subsequent degradation. Probably generates substrates for RQC. This is Endonuclease MutS2 from Clostridium botulinum (strain Eklund 17B / Type B).